Here is a 96-residue protein sequence, read N- to C-terminus: MNILGMKLFAHHKGGGSTANGRNSAGRRLGAKAGDGQEIHAGSIIYRQRGTKIHPGKNVGQGGDDTLFALVNGVVKFERLGKYKKQVSVYPAEEAK.

Positions 13 to 33 (KGGGSTANGRNSAGRRLGAKA) are disordered.

It belongs to the bacterial ribosomal protein bL27 family.

This Lactobacillus acidophilus (strain ATCC 700396 / NCK56 / N2 / NCFM) protein is Large ribosomal subunit protein bL27.